A 45-amino-acid chain; its full sequence is Endo-1,4-beta-xylanase Xyn10A (45 aa).

The protein belongs to the glycosyl hydrolase 10 (cellulase F) family.

The protein resides in the secreted. It is found in the extracellular space. It catalyses the reaction Endohydrolysis of (1-&gt;4)-beta-D-xylosidic linkages in xylans.. The enzyme catalyses Endohydrolysis of (1-&gt;4)-beta-D-glucosidic linkages in cellulose, lichenin and cereal beta-D-glucans.. It functions in the pathway glycan degradation; xylan degradation. In terms of biological role, has xylanase, avicelase and cellobiohydrolase activity. The chain is Endo-1,4-beta-xylanase Xyn10A from Gloeophyllum trabeum (Brown rot fungus).